Here is a 476-residue protein sequence, read N- to C-terminus: CBL-interacting protein kinase 30 (476 aa).

The Protein kinase domain maps to 17–272 (YKLGRLLGRG…ISKIMDRPWF (256 aa)). ATP contacts are provided by residues 23-31 (LGRGTFAKV) and Lys46. Asp140 (proton acceptor) is an active-site residue. Residues 158 to 187 (DFGLSALDGGLRGDGLLHTTCGTPAYVAPE) are activation loop. Residues 296–315 (KEASQQHDDEEDDGFAREKK) are disordered. An NAF domain is found at 299–353 (SQQHDDEEDDGFAREKKKRSNVIMSSPVIDVRPSSMNAFDIISRSRGLDLSKMFD). The tract at residues 358–387 (RSEARFSTRETTTAIVSKLEEIAEAGRFSF) is PPI.

The protein belongs to the protein kinase superfamily. CAMK Ser/Thr protein kinase family. SNF1 subfamily. Mn(2+) serves as cofactor.

It catalyses the reaction L-seryl-[protein] + ATP = O-phospho-L-seryl-[protein] + ADP + H(+). The enzyme catalyses L-threonyl-[protein] + ATP = O-phospho-L-threonyl-[protein] + ADP + H(+). Its function is as follows. CIPK serine-threonine protein kinases interact with CBL proteins. Binding of a CBL protein to the regulatory NAF domain of CIPK protein lead to the activation of the kinase in a calcium-dependent manner. This is CBL-interacting protein kinase 30 (CIPK30) from Oryza sativa subsp. japonica (Rice).